We begin with the raw amino-acid sequence, 127 residues long: Peroxiredoxin-2 (127 aa).

Residues 1–125 (LFFYPLDFTF…ALRLVQGXQY (125 aa)) form the Thioredoxin domain. Cysteine 12 acts as the Cysteine sulfenic acid (-SOH) intermediate in catalysis. The residue at position 73 (serine 73) is a Phosphoserine.

This sequence belongs to the peroxiredoxin family. AhpC/Prx1 subfamily. As to quaternary structure, homodimer; disulfide-linked, upon oxidation. 5 homodimers assemble to form a ring-like decamer. Interacts with TIPIN. In terms of processing, the enzyme can be inactivated by further oxidation of the cysteine sulfenic acid (C(P)-SOH) to sulphinic acid (C(P)-SO2H) instead of its condensation to a disulfide bond. It can be reactivated by forming a transient disulfide bond with sulfiredoxin SRXN1, which reduces the cysteine sulfinic acid in an ATP- and Mg-dependent manner. Post-translationally, acetylation increases resistance to transition to high molecular-mass complexes. Deacetylated by HDAC6 which decreases reducing activity.

It localises to the cytoplasm. The catalysed reaction is a hydroperoxide + [thioredoxin]-dithiol = an alcohol + [thioredoxin]-disulfide + H2O. Its function is as follows. Thiol-specific peroxidase that catalyzes the reduction of hydrogen peroxide and organic hydroperoxides to water and alcohols, respectively. Plays a role in cell protection against oxidative stress by detoxifying peroxides and as sensor of hydrogen peroxide-mediated signaling events. Might participate in the signaling cascades of growth factors and tumor necrosis factor-alpha by regulating the intracellular concentrations of H(2)O(2). In Sus scrofa (Pig), this protein is Peroxiredoxin-2 (PRDX2).